The following is a 1000-amino-acid chain: Exportin-T (1000 aa).

Belongs to the exportin family.

The protein localises to the nucleus. Its subcellular location is the cytoplasm. Functionally, tRNA nucleus export receptor which facilitates tRNA translocation across the nuclear pore complex. Involved in pre-tRNA splicing, probably by affecting the interaction of pre-tRNA with splicing endonuclease. This is Exportin-T (LOS1) from Debaryomyces hansenii (strain ATCC 36239 / CBS 767 / BCRC 21394 / JCM 1990 / NBRC 0083 / IGC 2968) (Yeast).